Consider the following 457-residue polypeptide: uncharacterized protein (457 aa).

Position 75 is an N6-(pyridoxal phosphate)lysine (lysine 75).

Pyridoxal 5'-phosphate is required as a cofactor.

This is an uncharacterized protein from Sinorhizobium fredii (strain NBRC 101917 / NGR234).